The sequence spans 46 residues: Defensin-1 (46 aa).

Cystine bridges form between Cys3-Cys46, Cys14-Cys35, Cys20-Cys40, and Cys24-Cys42.

Belongs to the DEFL family. In terms of tissue distribution, epidermis and vascular bundles of pods, stems, roots, leaves and wet or dry seeds.

In terms of biological role, possesses antifungal activity sensitive to inorganic cations. This chain is Defensin-1, found in Pisum sativum (Garden pea).